A 957-amino-acid chain; its full sequence is Leucine--tRNA ligase (957 aa).

Residues 70–81 (PYPSGAGLHVGH) carry the 'HIGH' region motif. The 'KMSKS' region signature appears at 727-731 (KMGKS). ATP is bound at residue Lys730.

It belongs to the class-I aminoacyl-tRNA synthetase family.

The protein resides in the cytoplasm. The catalysed reaction is tRNA(Leu) + L-leucine + ATP = L-leucyl-tRNA(Leu) + AMP + diphosphate. The polypeptide is Leucine--tRNA ligase (Corynebacterium efficiens (strain DSM 44549 / YS-314 / AJ 12310 / JCM 11189 / NBRC 100395)).